The primary structure comprises 365 residues: UDP-N-acetylglucosamine--N-acetylmuramyl-(pentapeptide) pyrophosphoryl-undecaprenol N-acetylglucosamine transferase (365 aa).

UDP-N-acetyl-alpha-D-glucosamine contacts are provided by residues 17–19 (TGG), asparagine 129, arginine 167, serine 194, isoleucine 250, 269–274 (ALTVSE), and glutamine 295.

It belongs to the glycosyltransferase 28 family. MurG subfamily.

It localises to the cell inner membrane. The enzyme catalyses di-trans,octa-cis-undecaprenyl diphospho-N-acetyl-alpha-D-muramoyl-L-alanyl-D-glutamyl-meso-2,6-diaminopimeloyl-D-alanyl-D-alanine + UDP-N-acetyl-alpha-D-glucosamine = di-trans,octa-cis-undecaprenyl diphospho-[N-acetyl-alpha-D-glucosaminyl-(1-&gt;4)]-N-acetyl-alpha-D-muramoyl-L-alanyl-D-glutamyl-meso-2,6-diaminopimeloyl-D-alanyl-D-alanine + UDP + H(+). It participates in cell wall biogenesis; peptidoglycan biosynthesis. In terms of biological role, cell wall formation. Catalyzes the transfer of a GlcNAc subunit on undecaprenyl-pyrophosphoryl-MurNAc-pentapeptide (lipid intermediate I) to form undecaprenyl-pyrophosphoryl-MurNAc-(pentapeptide)GlcNAc (lipid intermediate II). The sequence is that of UDP-N-acetylglucosamine--N-acetylmuramyl-(pentapeptide) pyrophosphoryl-undecaprenol N-acetylglucosamine transferase from Shewanella piezotolerans (strain WP3 / JCM 13877).